A 179-amino-acid chain; its full sequence is ATP synthase subunit delta (179 aa).

The protein belongs to the ATPase delta chain family. F-type ATPases have 2 components, F(1) - the catalytic core - and F(0) - the membrane proton channel. F(1) has five subunits: alpha(3), beta(3), gamma(1), delta(1), epsilon(1). F(0) has three main subunits: a(1), b(2) and c(10-14). The alpha and beta chains form an alternating ring which encloses part of the gamma chain. F(1) is attached to F(0) by a central stalk formed by the gamma and epsilon chains, while a peripheral stalk is formed by the delta and b chains.

Its subcellular location is the cell membrane. In terms of biological role, f(1)F(0) ATP synthase produces ATP from ADP in the presence of a proton or sodium gradient. F-type ATPases consist of two structural domains, F(1) containing the extramembraneous catalytic core and F(0) containing the membrane proton channel, linked together by a central stalk and a peripheral stalk. During catalysis, ATP synthesis in the catalytic domain of F(1) is coupled via a rotary mechanism of the central stalk subunits to proton translocation. Functionally, this protein is part of the stalk that links CF(0) to CF(1). It either transmits conformational changes from CF(0) to CF(1) or is implicated in proton conduction. In Clostridium beijerinckii (strain ATCC 51743 / NCIMB 8052) (Clostridium acetobutylicum), this protein is ATP synthase subunit delta.